The primary structure comprises 494 residues: MIPVIALVGRPNVGKSTLFNRLTHTRDALVADFPGLTRDRKYGRAEVEGHEFIVIDTGGIDGTEDGVETKMAGQSLLAIEEADIVLFMVDARAGLMPADQGIAQHLRSREKATFLVANKTDGIDPDTATADFYSLGLGEVHAIAASHGRGVTQLIEDVMAPYMDAEEPEAELTDEEANAAYWAAQEADEDEIPEDEEDDFDPLSLPIKLAIVGRPNVGKSTLTNRILGEDRVVVYDMPGTTRDSIYIPMTRDEREYILIDTAGVRKRGKITEAVEKFSVIKTLQAIEDSNVVLLVIDARDGISDQDLSLLGFILNSGRSLVIAVNKWDGMSEEARAQVKDMLDLRLGFVDFARIHFISALHGSGVGNLFESIQEAYDCSTKRVGTSLLTRIMQMAEEDHQPPLVRGRRVKLKYAHAGGYNPPIVVIHGNQVTDLSDSYKRYLMNYFRRSLKVMGTPIRIQFKEGENPFAGKRNTLTPNQMRKRKRLMSHLKKGK.

2 consecutive EngA-type G domains span residues P3–E166 and I207–T380. GTP-binding positions include G9–S16, D56–I60, N118–D121, G213–S220, D260–V264, and N325–D328. The region spanning K381 to E465 is the KH-like domain.

Belongs to the TRAFAC class TrmE-Era-EngA-EngB-Septin-like GTPase superfamily. EngA (Der) GTPase family. As to quaternary structure, associates with the 50S ribosomal subunit.

GTPase that plays an essential role in the late steps of ribosome biogenesis. The polypeptide is GTPase Der (Yersinia enterocolitica serotype O:8 / biotype 1B (strain NCTC 13174 / 8081)).